The primary structure comprises 210 residues: uncharacterized protein (210 aa).

This is an uncharacterized protein from Escherichia coli (Bacteriophage T4).